Consider the following 71-residue polypeptide: Stathmin-1-B (71 aa).

Positions 1–67 (KREHEKEVLQ…EIRKGKECKE (67 aa)) form a coiled coil. Residues 1-71 (KREHEKEVLQ…GKECKEPSED (71 aa)) enclose the SLD domain.

Belongs to the stathmin family. In terms of assembly, binds to two alpha/beta-tubulin heterodimers. Post-translationally, from unphosphorylated forms to highly phosphorylated ones in the mature egg, followed by progressive dephosphorylation from the mid-blastula to the tailbud stage. In terms of tissue distribution, ubiquitous. Mostly abundant in brain and oocytes.

Its subcellular location is the cytoplasm. It localises to the cytoskeleton. Functionally, involved in the regulation of the microtubule (MT) filament system by destabilizing microtubules. It prevents assembly and promotes disassembly of microtubules. The polypeptide is Stathmin-1-B (stmn1-b) (Xenopus laevis (African clawed frog)).